Here is a 374-residue protein sequence, read N- to C-terminus: Transcription factor IIIA (374 aa).

C2H2-type zinc fingers lie at residues 23–47 (FHCPYEECGKKYSRPSLLEQHLRTH), 53–77 (FVCDYTGCSKAFYRKSHLKIHKRCH), 83–107 (FSCHYDGCDAQFYTQQHLERHIEVH), 113–138 (YACTWEGCDECFSKHQQLRSHISACH), 144–169 (YPCTYQDCELRFATKQKLQNHVNRAH), 204–226 (PSCSICGRQFKTAAHLRHHVVLH), and 236–261 (YHCPMEGCKKSFTRSSALKKHISVIH). Residues 267-291 (FHCDSCGTKFGYKHMLQRHLERGTC) form a C2H2-type 8; atypical zinc finger. A C2H2-type 9 zinc finger spans residues 349 to 374 (YSCSFPECNYRFKRLYDMHRHLNSHH).

It localises to the nucleus. Is required for correct transcription of 5S RNA genes by RNA polymerase III. Also binds the transcribed 5S RNA's. Initiates transcription of the 5S ribosomal RNA gene. This is Transcription factor IIIA (sfc2) from Schizosaccharomyces pombe (strain 972 / ATCC 24843) (Fission yeast).